The sequence spans 376 residues: uncharacterized protein (376 aa).

The Peptidase M14 domain occupies 82 to 372 (KIYDDSAVEK…ATSGILWRAL (291 aa)). Zn(2+)-binding residues include histidine 138, glutamate 141, and histidine 283. The Proton donor/acceptor role is filled by glutamate 344.

Belongs to the peptidase M14 family. Zn(2+) serves as cofactor.

This is an uncharacterized protein from Bacillus subtilis (strain 168).